Here is a 146-residue protein sequence, read N- to C-terminus: Snaclec coagulation factor X-activating enzyme light chain 1 (146 aa).

An N-terminal signal peptide occupies residues Met1 to Ala23. An intrachain disulfide couples Cys27 to Cys38. Positions Tyr34–Lys145 constitute a C-type lectin domain. N-linked (GlcNAc...) (complex) asparagine glycosylation occurs at Asn47. 2 disulfide bridges follow: Cys55–Cys144 and Cys121–Cys136.

Belongs to the snaclec family. In terms of assembly, heterotrimer; disulfide-linked. The heterotrimer consists of 1 heavy chain (a metalloproteinase) and 2 light chains: LC1 and LC2. Post-translationally, N-glycosylated; probably required for conformation. Removal of easily accessible sugars does not change its functional capacity, but removal of the core sugars with N-glycanase causes a virtually complete loss of enzyme activity, apparently as a result of major conformational changes in the molecule. Not O-glycosylated. In terms of tissue distribution, expressed by the venom gland.

It localises to the secreted. In terms of biological role, regulatory subunit of the blood coagulation factor X- and IX-activating enzyme. The enzyme activates coagulation factor X (F10) by cleaving the Arg-Ile bond and is also able to activate coagulation factor IX (F9) and protein S (PROS1) by specific cleavage of Arg-Ile and Arg-Val bonds. May serve as an exosite by which the enzyme recognizes and binds to the Gla domain of factor X (F10) and factor IX (F9) in a calcium-dependent manner. This chain is Snaclec coagulation factor X-activating enzyme light chain 1 (LC1), found in Daboia siamensis (Eastern Russel's viper).